The sequence spans 130 residues: Small ribosomal subunit protein uS9 (130 aa).

This sequence belongs to the universal ribosomal protein uS9 family.

The protein is Small ribosomal subunit protein uS9 of Hamiltonella defensa subsp. Acyrthosiphon pisum (strain 5AT).